A 290-amino-acid polypeptide reads, in one-letter code: ATP synthase gamma chain (290 aa).

This sequence belongs to the ATPase gamma chain family. As to quaternary structure, F-type ATPases have 2 components, CF(1) - the catalytic core - and CF(0) - the membrane proton channel. CF(1) has five subunits: alpha(3), beta(3), gamma(1), delta(1), epsilon(1). CF(0) has three main subunits: a, b and c.

Its subcellular location is the cell membrane. Functionally, produces ATP from ADP in the presence of a proton gradient across the membrane. The gamma chain is believed to be important in regulating ATPase activity and the flow of protons through the CF(0) complex. This is ATP synthase gamma chain from Buchnera aphidicola subsp. Diuraphis noxia.